A 363-amino-acid chain; its full sequence is MTSKIENITIEQLPIIDIESYGNDKEEELKKKLISKEIENACKNFGFFYIKGHGIDQELIDRLERLSKKFFSLDQSIKMKYRMELAQKAWRGYFVVGGELTSGLKDWKEGLYLGTELNDDHPLVIAQTPLHGLNLFPTLEEEIEYDIVGFKDTILTYIDKVTKLGHSLMELIAISLNLSADYFSSRYTKDPLILYRIFNYPSIISSGDDNKTTGESSDDNDKVEWGVGEHTDYGVLTILYQDDVGGLQVHSKNGWISAPPIKGTFVCNIGDMLDRMTGGLYRSTPHRVELNRSGRDRISFPLFFDPNFNSYPTEIEGIEQIENKDDSSSRWDHFNIHSFKGSYGQYLLNKIGKVFPDLKNNVL.

Positions 197 to 306 constitute a Fe2OG dioxygenase domain; the sequence is IFNYPSIISS…RISFPLFFDP (110 aa). Positions 230, 232, and 286 each coordinate Fe cation. Arg297 contributes to the 2-oxoglutarate binding site.

This sequence belongs to the iron/ascorbate-dependent oxidoreductase family. The cofactor is Fe(2+).

The sequence is that of Probable iron/ascorbate oxidoreductase DDB_G0283291 from Dictyostelium discoideum (Social amoeba).